The chain runs to 203 residues: Inactive ribonuclease-like protein 9 (203 aa).

A signal peptide spans 1 to 25 (MRTPITTHSLLLLLLLQQLLQPVQL). Intrachain disulfides connect Cys96–Cys151, Cys114–Cys166, and Cys121–Cys128. N-linked (GlcNAc...) asparagine glycans are attached at residues Asn129 and Asn141.

This sequence belongs to the pancreatic ribonuclease family.

It is found in the secreted. In terms of biological role, does not exhibit any ribonuclease activity. The sequence is that of Inactive ribonuclease-like protein 9 (RNASE9) from Macaca assamensis (Assam macaque).